The sequence spans 126 residues: Aspartate 1-decarboxylase (126 aa).

Ser25 (schiff-base intermediate with substrate; via pyruvic acid) is an active-site residue. At Ser25 the chain carries Pyruvic acid (Ser). Thr57 is a binding site for substrate. Tyr58 (proton donor) is an active-site residue. 73–75 contributes to the substrate binding site; sequence GAA.

The protein belongs to the PanD family. In terms of assembly, heterooctamer of four alpha and four beta subunits. It depends on pyruvate as a cofactor. In terms of processing, is synthesized initially as an inactive proenzyme, which is activated by self-cleavage at a specific serine bond to produce a beta-subunit with a hydroxyl group at its C-terminus and an alpha-subunit with a pyruvoyl group at its N-terminus.

It is found in the cytoplasm. It carries out the reaction L-aspartate + H(+) = beta-alanine + CO2. The protein operates within cofactor biosynthesis; (R)-pantothenate biosynthesis; beta-alanine from L-aspartate: step 1/1. Catalyzes the pyruvoyl-dependent decarboxylation of aspartate to produce beta-alanine. The protein is Aspartate 1-decarboxylase of Salmonella dublin (strain CT_02021853).